Reading from the N-terminus, the 199-residue chain is Nucleoside triphosphate pyrophosphatase (199 aa).

Residue Asp-76 is the Proton acceptor of the active site.

Belongs to the Maf family. A divalent metal cation serves as cofactor.

The protein localises to the cytoplasm. It catalyses the reaction a ribonucleoside 5'-triphosphate + H2O = a ribonucleoside 5'-phosphate + diphosphate + H(+). The catalysed reaction is a 2'-deoxyribonucleoside 5'-triphosphate + H2O = a 2'-deoxyribonucleoside 5'-phosphate + diphosphate + H(+). Its function is as follows. Nucleoside triphosphate pyrophosphatase. May have a dual role in cell division arrest and in preventing the incorporation of modified nucleotides into cellular nucleic acids. This chain is Nucleoside triphosphate pyrophosphatase, found in Ruegeria pomeroyi (strain ATCC 700808 / DSM 15171 / DSS-3) (Silicibacter pomeroyi).